The sequence spans 37 residues: Large ribosomal subunit protein bL36 (37 aa).

The protein belongs to the bacterial ribosomal protein bL36 family.

This Aliivibrio fischeri (strain ATCC 700601 / ES114) (Vibrio fischeri) protein is Large ribosomal subunit protein bL36.